A 589-amino-acid chain; its full sequence is Cyclohexane-1,2-dione hydrolase (589 aa).

Glu52 contacts thiamine diphosphate. A thiamine pyrophosphate binding region spans residues 400-480; that stretch reads NHTLPMFGGA…VITMVFTNES (81 aa). 2 residues coordinate Mg(2+): Asp451 and Asn478.

It belongs to the TPP enzyme family. Homodimer. Mg(2+) is required as a cofactor. The cofactor is thiamine diphosphate. Requires FAD as cofactor.

The catalysed reaction is cyclohexan-1,2-dione + H2O = 6-oxohexanoate + H(+). Catalyzes the ring-opening cleavage of the alicyclic alcohol cyclohexane-1,2-dione. In Azoarcus sp, this protein is Cyclohexane-1,2-dione hydrolase.